We begin with the raw amino-acid sequence, 513 residues long: Fructose import ATP-binding protein FruK (513 aa).

ABC transporter domains follow at residues 8 to 244 (VVMK…IGKS) and 262 to 505 (PGEK…IANT). 40–47 (GENGAGKS) provides a ligand contact to ATP.

Belongs to the ABC transporter superfamily. The complex is composed of an ATP-binding protein (FruK), two transmembrane proteins (FruF and FruG) and a solute-binding protein (FruE).

It localises to the cell membrane. The enzyme catalyses D-fructose(out) + ATP + H2O = D-fructose(in) + ADP + phosphate + H(+). Its function is as follows. Part of the high-affinity ABC transporter complex FruEKFG involved in fructose uptake. Can also transport ribose and xylose, with lower affinity. Probably responsible for energy coupling to the transport system. In Bifidobacterium longum (strain NCC 2705), this protein is Fructose import ATP-binding protein FruK.